The following is an 859-amino-acid chain: Linoleate 9S-lipoxygenase 1 (859 aa).

The PLAT domain occupies 21–161 (VKGTVVLMKK…HYTTDRVFFS (141 aa)). The Lipoxygenase domain maps to 164–859 (TYLPHETPAT…GRGIPNSVSI (696 aa)). Residues 213-246 (KNPRPVLGGTQEYPYPRRGRTGRKPTKEDPQTES) form a disordered region. 5 residues coordinate Fe cation: histidine 519, histidine 524, histidine 711, asparagine 715, and isoleucine 859.

This sequence belongs to the lipoxygenase family. Monomer. Fe cation is required as a cofactor. In terms of tissue distribution, seedlings, roots, leaves, and flowers (at protein level). Expressed in guard cells.

The protein localises to the cytoplasm. It carries out the reaction (9Z,12Z)-octadecadienoate + O2 = (9S)-hydroperoxy-(10E,12Z)-octadecadienoate. The enzyme catalyses (9Z,12Z,15Z)-octadecatrienoate + O2 = (9S)-hydroperoxy-(10E,12Z,15Z)-octadecatrienoate. The protein operates within lipid metabolism; oxylipin biosynthesis. Its function is as follows. 9S-lipoxygenase that can use linoleic acid or linolenic acid as substrates. Plant lipoxygenases may be involved in a number of diverse aspects of plant physiology including growth and development, pest resistance, and senescence or responses to wounding. Catalyzes the hydroperoxidation of lipids containing a cis,cis-1,4-pentadiene structure. Function as regulators of root development by controlling the emergence of lateral roots. 9S-lypoxygenase-derived oxylipins may play an antagonistic role to ethylene signaling in the control of responses involving oxidative stress, lipid peroxidation and plant defense. LOX1-derived oxylipins may be involved in stress signaling from roots to shoots in response to cadmium exposure. 9S-lypoxygenase-derived oxylipins are engaged during infection to control the balance between salicylic acid (SA) and jasmonate (JA) signaling to facilitate infection by the fungal pathogen Fusarium graminearum. 9S-lypoxygenase-derived oxylipins activate brassinosteroid signaling to promote cell wall-based defense and limit pathogen infection. The LOX1-derived compound (9S)-hydroperoxy-(10E,12Z,15Z)-octadecatrienoate protects plant tissues against infection by the bacterial pathogen Pseudomonas syringae pv tomato DC3000. The LOX1-derived oxylipins are required to trigger stomatal closure in response to both infection by the bacterial pathogen Pseudomonas syringae pv tomato DC3000, and the pathogen-associated molecular pattern (PAMP) flagellin peptide flg22. Contributes to the oxidation of free fatty acids during seed aging. In Arabidopsis thaliana (Mouse-ear cress), this protein is Linoleate 9S-lipoxygenase 1.